We begin with the raw amino-acid sequence, 842 residues long: DNA gyrase subunit A (842 aa).

One can recognise a Topo IIA-type catalytic domain in the interval 42 to 511 (LPEVRDGLKP…ADGEVSDEDL (470 aa)). Residue Tyr130 is the O-(5'-phospho-DNA)-tyrosine intermediate of the active site. Residues 538-544 (QKRGGKG) carry the GyrA-box motif. The interval 822 to 842 (EDEAAESISESDADTAESPEA) is disordered.

Belongs to the type II topoisomerase GyrA/ParC subunit family. In terms of assembly, heterotetramer, composed of two GyrA and two GyrB chains. In the heterotetramer, GyrA contains the active site tyrosine that forms a transient covalent intermediate with DNA, while GyrB binds cofactors and catalyzes ATP hydrolysis.

It is found in the cytoplasm. It catalyses the reaction ATP-dependent breakage, passage and rejoining of double-stranded DNA.. Inhibited by 4-quinoline drugs (nalidixic acid, ciprofloxacin, ofloxacin), although it is much less sensitive than the corresponding enzyme from E.coli. Its function is as follows. A type II topoisomerase that negatively supercoils closed circular double-stranded (ds) DNA in an ATP-dependent manner to modulate DNA topology and maintain chromosomes in an underwound state. Negative supercoiling favors strand separation, and DNA replication, transcription, recombination and repair, all of which involve strand separation. Also able to catalyze the interconversion of other topological isomers of dsDNA rings, including catenanes and knotted rings. Type II topoisomerases break and join 2 DNA strands simultaneously in an ATP-dependent manner. In Mycolicibacterium smegmatis (strain ATCC 700084 / mc(2)155) (Mycobacterium smegmatis), this protein is DNA gyrase subunit A.